The sequence spans 209 residues: Thymidylate kinase (209 aa).

11 to 18 (GIEGAGKT) lines the ATP pocket.

It belongs to the thymidylate kinase family.

It carries out the reaction dTMP + ATP = dTDP + ADP. Phosphorylation of dTMP to form dTDP in both de novo and salvage pathways of dTTP synthesis. The sequence is that of Thymidylate kinase (tmk) from Pasteurella multocida (strain Pm70).